A 1211-amino-acid polypeptide reads, in one-letter code: MVDVNRFKSMQITLASPSKVRSWSYGEVKKPETINYRTLKPEREGLFDEVIFGPTKDWECACGKYKRIRYKGIVCDRCGVEVTRAKVRRERMGHIELKAPVSHIWYFKGIPSRMGLTLDMSPRALEEVIYFAAYVVIDPKDTPLEPKSLLTEREYREKIQEYGHGSFIAKMGAEAIQDLLKRVDLVTEIAELKEELKTATGQKRIKAVRRLDVLDAFHKSGNKPEWMILNILPVIPPDLRPMVQLDGGRFAASDLNDLYRRVINRNNRLARLLELNAPGIIVQNEKRMLQEAVDALIDNGRRGRPITGPGSRPLKSLSHMLKGKQGRFRQNLLGKRVDFSGRSVIAVGPTLKMYQCGVPREMAIELFKPFVIREIVAREFAGNVKAAKRMVERGDERIWDILEEVIKEHPVLLNRAPTLHRLGIQAFEPVLIDGKALRLHPLVCEAYNADFDGDQMAIHVPLSEEAQAEARLLMLAAEHILNPKDGKPVVTPSQDMVLGNYYLTMEDAGREGEGMVFKDKDEAVMAYRNGYVHLHSRVGIAVDSMPSKLWKDSQRHKIMVTTVGKILFNDIMPEDLPYLQEPNNANLTEGTPDKYFLKPGQNIQEVIDSLPINVPFKKKNLGNIIAETFKRFRTTETSAFLDRLKDLGYYHSTLAGLTVGIADIPVIDNKAEIIEAAHHRVEEINKAFRRGLMTDDDRYVAVTTTWREAKEALEKRLIETQDPKNPIVMMMDSGARGNISNFSQLAGMRGLMAAPNGRIMELPILSNFREGLSVLEMFFSTHGARKGMTDTALKTADSGYLTRRLVDVAQDVIIREDDCGTDRGLLIRAITDGKEVTETLEERLQGRYTRKSVKHPETGEVLIGADQLITEDMARKIVDAGVEEVTIRSVFTCATRHGVCRHCYGINLATGDAVEVGEAVGTIAAQSIGEPGTQLTMRTFHTGGVASNTDITQGLPRIQEIFEARNPKGEAVITEVKGTVIEIEEDASTRTKKVYVQGKTGMGEYVVPFTARMKVEVGDEVNRGAALTEGSIQPKHLLEVRDTLSVETYLLAEVQKVYRSQGVEIGDKHVEVMVRQMLRKVRVMDPGDTDLLPGTLMDIADFTDANKEIVISGGIPATSRPVLMGITKASLETNSFLSAASFQETTRVLTDAAIRGKKDHLLGLKENVIIGKIIPAGTGMVRYRNIEPQAINEVEVIEEAEATEEPAIIKE.

Positions 60, 62, 75, and 78 each coordinate Zn(2+). Positions 450, 452, and 454 each coordinate Mg(2+). Zn(2+) is bound by residues Cys819, Cys893, Cys900, and Cys903.

It belongs to the RNA polymerase beta' chain family. The RNAP catalytic core consists of 2 alpha, 1 beta, 1 beta' and 1 omega subunit. When a sigma factor is associated with the core the holoenzyme is formed, which can initiate transcription. Mg(2+) serves as cofactor. The cofactor is Zn(2+).

It carries out the reaction RNA(n) + a ribonucleoside 5'-triphosphate = RNA(n+1) + diphosphate. In terms of biological role, DNA-dependent RNA polymerase catalyzes the transcription of DNA into RNA using the four ribonucleoside triphosphates as substrates. The sequence is that of DNA-directed RNA polymerase subunit beta' from Streptococcus equi subsp. equi (strain 4047).